The primary structure comprises 485 residues: Anthranilate synthase component I-like protein (485 aa).

L-tryptophan contacts are provided by residues Ser69 and 271 to 273 (PFA). 306–307 (GT) contacts chorismate. A Mg(2+)-binding site is contributed by Glu333. Residues Arg441, 455–457 (GAG), and Gly457 contribute to the chorismate site. Glu470 provides a ligand contact to Mg(2+).

Belongs to the anthranilate synthase component I family. In terms of assembly, tetramer of two components I and two components II. Mg(2+) is required as a cofactor.

The enzyme catalyses chorismate + L-glutamine = anthranilate + pyruvate + L-glutamate + H(+). Its pathway is amino-acid biosynthesis; L-tryptophan biosynthesis; L-tryptophan from chorismate: step 1/5. This Synechocystis sp. (strain ATCC 27184 / PCC 6803 / Kazusa) protein is Anthranilate synthase component I-like protein (trpE2).